The sequence spans 120 residues: NAD(P)H-quinone oxidoreductase subunit 3, chloroplastic (120 aa).

3 consecutive transmembrane segments (helical) span residues 9 to 29 (IFWA…FISG), 64 to 84 (MFAL…PWAM), and 88 to 108 (VLGV…IVGL).

The protein belongs to the complex I subunit 3 family. As to quaternary structure, NDH is composed of at least 16 different subunits, 5 of which are encoded in the nucleus.

Its subcellular location is the plastid. It is found in the chloroplast thylakoid membrane. The enzyme catalyses a plastoquinone + NADH + (n+1) H(+)(in) = a plastoquinol + NAD(+) + n H(+)(out). It carries out the reaction a plastoquinone + NADPH + (n+1) H(+)(in) = a plastoquinol + NADP(+) + n H(+)(out). Its function is as follows. NDH shuttles electrons from NAD(P)H:plastoquinone, via FMN and iron-sulfur (Fe-S) centers, to quinones in the photosynthetic chain and possibly in a chloroplast respiratory chain. The immediate electron acceptor for the enzyme in this species is believed to be plastoquinone. Couples the redox reaction to proton translocation, and thus conserves the redox energy in a proton gradient. This is NAD(P)H-quinone oxidoreductase subunit 3, chloroplastic from Panax ginseng (Korean ginseng).